The sequence spans 295 residues: Small ribosomal subunit protein uS2 (295 aa).

The protein belongs to the universal ribosomal protein uS2 family.

The protein is Small ribosomal subunit protein uS2 of Rickettsia canadensis (strain McKiel).